A 116-amino-acid chain; its full sequence is Large ribosomal subunit protein bL19 (116 aa).

This sequence belongs to the bacterial ribosomal protein bL19 family.

Its function is as follows. This protein is located at the 30S-50S ribosomal subunit interface and may play a role in the structure and function of the aminoacyl-tRNA binding site. The sequence is that of Large ribosomal subunit protein bL19 from Staphylococcus carnosus (strain TM300).